The chain runs to 613 residues: ATP-dependent RNA helicase DeaD (613 aa).

Residues Ile-5–Gln-33 carry the Q motif motif. The Helicase ATP-binding domain occupies Ile-36–Val-207. Ala-49–Thr-56 is an ATP binding site. Residues Asp-155–Asp-158 carry the DEAD box motif. Residues Lys-231 to Leu-378 form the Helicase C-terminal domain. Disordered regions lie at residues Ile-434–Met-476 and Ala-552–Phe-613. Composition is skewed to basic and acidic residues over residues Pro-440–Gly-469 and Asp-556–Phe-613.

This sequence belongs to the DEAD box helicase family. DeaD/CsdA subfamily.

It is found in the cytoplasm. It carries out the reaction ATP + H2O = ADP + phosphate + H(+). Its function is as follows. DEAD-box RNA helicase involved in various cellular processes at low temperature, including ribosome biogenesis, mRNA degradation and translation initiation. The chain is ATP-dependent RNA helicase DeaD from Haemophilus influenzae (strain ATCC 51907 / DSM 11121 / KW20 / Rd).